A 235-amino-acid polypeptide reads, in one-letter code: Carbonic anhydrase 1 (235 aa).

Positions 1-235 (GNKQSPVDIK…LKGRTVKASF (235 aa)) constitute an Alpha-carbonic anhydrase domain. The active-site Proton donor/acceptor is the histidine 40. Residues histidine 69, histidine 71, and histidine 94 each coordinate Zn(2+). Residues threonine 174 and 174-175 (TH) each bind substrate.

This sequence belongs to the alpha-carbonic anhydrase family. Zn(2+) serves as cofactor.

The protein localises to the cytoplasm. It carries out the reaction hydrogencarbonate + H(+) = CO2 + H2O. The catalysed reaction is urea = cyanamide + H2O. Inhibited by acetazolamide. Its function is as follows. Catalyzes the reversible hydration of carbon dioxide. Can hydrate cyanamide to urea. The polypeptide is Carbonic anhydrase 1 (CA1) (Oryctolagus cuniculus (Rabbit)).